The chain runs to 238 residues: Endothelial protein C receptor (238 aa).

The first 17 residues, 1-17, serve as a signal peptide directing secretion; the sequence is MLTTLLPILLLSGWAFC. The Extracellular segment spans residues 18–210; sequence SQDASDGLQR…GSQTSRSYTS (193 aa). N-linked (GlcNAc...) asparagine glycans are attached at residues Asn47, Asn64, Asn136, and Asn172. Cys118 and Cys186 are joined by a disulfide. A helical membrane pass occupies residues 211–231; the sequence is LVLGVLVGSFIIAGVAVGIFL. Residues 232–238 are Cytoplasmic-facing; the sequence is CTGGRRC.

In terms of processing, N-glycosylated. Post-translationally, a soluble form exists; probably released by a metalloprotease. Seems to have the same activity as the membrane-bound form. Expressed strongly in the endothelial cells of arteries and veins in heart and lung, less intensely in capillaries in the lung and skin, and not at all in the endothelium of small vessels of the liver and kidney.

The protein localises to the membrane. Its function is as follows. Binds activated protein C. Enhances protein C activation by the thrombin-thrombomodulin complex; plays a role in the protein C pathway controlling blood coagulation. The polypeptide is Endothelial protein C receptor (PROCR) (Homo sapiens (Human)).